Reading from the N-terminus, the 82-residue chain is Large ribosomal subunit protein uL23 (82 aa).

Belongs to the universal ribosomal protein uL23 family. As to quaternary structure, part of the 50S ribosomal subunit. Contacts protein L29.

In terms of biological role, binds to 23S rRNA. One of the proteins that surrounds the polypeptide exit tunnel on the outside of the ribosome. The protein is Large ribosomal subunit protein uL23 of Sulfolobus acidocaldarius (strain ATCC 33909 / DSM 639 / JCM 8929 / NBRC 15157 / NCIMB 11770).